The chain runs to 1155 residues: Protein BREAST CANCER SUSCEPTIBILITY 2 homolog B (1155 aa).

BRCA2 repeat units follow at residues 63–97, 116–150, 163–197, and 257–291; these read MPGEIPMFRTGLGKSVVLKESSIAKAKSILAENVA, TAETMPMFRTALGKTVPLKESSIAKPLSILGSDMI, FGVPNSLFQTASNKKVNVSSAGLARAKALLGLEED, and LKVPPTKFQTAGGKSLSVSAEALKRARNLLGDPEL.

As to quaternary structure, interacts with RAD51 and DMC1. Interacts with DSS1(I) and DSS1(V). Can interact with both RAD51 and DSS1(I) or both DMC1 and DSS1(I) in a tripartite complex. Expressed in flower buds.

In terms of biological role, involved in double-strand break repair and/or homologous recombination by mediating RAD51- and DMC1-facilitated DNA repair. Plays an essential role in both somatic and meiotic homologous recombination. Is crucial for the formation of RAD51 and DMC1 foci during male meiotic homologous recombination in prophase I. This chain is Protein BREAST CANCER SUSCEPTIBILITY 2 homolog B, found in Arabidopsis thaliana (Mouse-ear cress).